An 87-amino-acid chain; its full sequence is U3-theraphotoxin-Hhn1h (87 aa).

An N-terminal signal peptide occupies residues 1-24 (MVNMKASMFLTFAGLVLLFVVCYA). A propeptide spanning residues 25–52 (SESEEKEFPKEMLSSIFAVDNDSKQEER) is cleaved from the precursor. 3 disulfides stabilise this stretch: C54–C67, C61–C72, and C66–C79.

It belongs to the neurotoxin 10 (Hwtx-1) family. 51 (Hntx-8) subfamily. Hntx-8 sub-subfamily. As to expression, expressed by the venom gland.

It is found in the secreted. Its function is as follows. Ion channel inhibitor. The polypeptide is U3-theraphotoxin-Hhn1h (Cyriopagopus hainanus (Chinese bird spider)).